We begin with the raw amino-acid sequence, 177 residues long: ADP-ribose 1''-phosphate phosphatase (177 aa).

The 177-residue stretch at 1–177 (MSNITYVKGN…GDMSFTVYQL (177 aa)) folds into the Macro domain. Substrate is bound by residues 9–11 (GNI), 24–26 (SCN), 31–36 (WGGGIA), and 147–153 (INSGIFG).

The protein belongs to the POA1 family.

It catalyses the reaction ADP-alpha-D-ribose 1''-phosphate + H2O = ADP-D-ribose + phosphate. Its function is as follows. Highly specific phosphatase involved in the metabolism of ADP-ribose 1''-phosphate (Appr1p) which is produced as a consequence of tRNA splicing. Removes ADP-ribose from glutamate residues in proteins bearing a single ADP-ribose moiety. Inactive towards proteins bearing poly-ADP-ribose. The polypeptide is ADP-ribose 1''-phosphate phosphatase (POA1) (Saccharomyces cerevisiae (strain YJM789) (Baker's yeast)).